The chain runs to 218 residues: N-(5'-phosphoribosyl)anthranilate isomerase (218 aa).

Belongs to the TrpF family.

It carries out the reaction N-(5-phospho-beta-D-ribosyl)anthranilate = 1-(2-carboxyphenylamino)-1-deoxy-D-ribulose 5-phosphate. Its pathway is amino-acid biosynthesis; L-tryptophan biosynthesis; L-tryptophan from chorismate: step 3/5. This Chelativorans sp. (strain BNC1) protein is N-(5'-phosphoribosyl)anthranilate isomerase.